Consider the following 670-residue polypeptide: tRNA 5-methylaminomethyl-2-thiouridine biosynthesis bifunctional protein MnmC (670 aa).

Residues 1-242 are tRNA (mnm(5)s(2)U34)-methyltransferase; it reads MTFSVQHAEI…KRECLSGLKI (242 aa). The tract at residues 269–670 is FAD-dependent cmnm(5)s(2)U34 oxidoreductase; sequence IGGGIASLCA…KKWLKGSKVE (402 aa).

This sequence in the N-terminal section; belongs to the methyltransferase superfamily. tRNA (mnm(5)s(2)U34)-methyltransferase family. It in the C-terminal section; belongs to the DAO family. Requires FAD as cofactor.

It is found in the cytoplasm. The enzyme catalyses 5-aminomethyl-2-thiouridine(34) in tRNA + S-adenosyl-L-methionine = 5-methylaminomethyl-2-thiouridine(34) in tRNA + S-adenosyl-L-homocysteine + H(+). Catalyzes the last two steps in the biosynthesis of 5-methylaminomethyl-2-thiouridine (mnm(5)s(2)U) at the wobble position (U34) in tRNA. Catalyzes the FAD-dependent demodification of cmnm(5)s(2)U34 to nm(5)s(2)U34, followed by the transfer of a methyl group from S-adenosyl-L-methionine to nm(5)s(2)U34, to form mnm(5)s(2)U34. This is tRNA 5-methylaminomethyl-2-thiouridine biosynthesis bifunctional protein MnmC from Haemophilus influenzae (strain ATCC 51907 / DSM 11121 / KW20 / Rd).